Consider the following 202-residue polypeptide: Odorant-binding protein 59a (202 aa).

An N-terminal signal peptide occupies residues 1 to 20; sequence MKQLIFLLICLSCGTCSIYA. The segment covering 43-53 has biased composition (basic and acidic residues); sequence HRQDEDEDRGR. The tract at residues 43–105 is disordered; it reads HRQDEDEDRG…QSDGRNHTSN (63 aa). Residues 54 to 65 are compositionally biased toward gly residues; it reads GGQGRQGNGYEY.

The protein belongs to the PBP/GOBP family. As to expression, expressed in non-neuronal cells in hygrosensitive sensilla in the second chamber of the sacculus of the antenna third segment (at protein level).

It is found in the secreted. In terms of biological role, odorant-binding protein required for hygrotaxis behavior in humidity-detecting sensilla. The sequence is that of Odorant-binding protein 59a from Drosophila melanogaster (Fruit fly).